A 2376-amino-acid polypeptide reads, in one-letter code: MASRFTFPPQRDQGIGFTFPPTNKAEGSSNNNQISIDIDPSGQDVLEEINEAPLNTFPLHQSVTDAPIIDIPSPTDMSEGTSLNNQLLLRQQQQQGTGEGQALPPTFVEEQSDQNKISMLLPEQKQQRMQESAPPDITAKSVAEDYVTTLRQQMATDWKSPSEYALHILFTKFIRYAENKLNMCLQQLDMAEPPIVEILGEGVDPSFDEIIKSLGHIAKKKPKPVIDAMMFWRKTKSEAANSASEEMEKLLKEYEFEKAHPSQAHFLMNRRLSRSSSNTTSKYKHNNNTNNLPGMKRHVSSSFNNKVPLIKASSSNNSATSSPSIANSQLKSLENTIEVAKEEAFLADRKSLISIYILCRVLNEIVKQASSNEEEDLSDKLEEIVFTQLKTTDPLSISTSLIKSSNWNSFAELLGSMSEKKFLSVSDRFIADLEKIPAYIPPELEPSTHLLILGMRYLKLRNYPLEKFEESADFMKSLSKFFAKTENFPVCLAYAEVTNQLLLPLAGSLTAEVNHPTWVEAMSTLLNTAKRLQADSKYWVSGFKLTVSILCASPPDLFSKQWLSLLEANASKVKSKSLNERIIFAVGLSRLVWVYLYRCPETLNNTTRTLTKLLQLYLNTRKKENWITGDFGLLNPLTDALISIGFLHPNFLMEQALIPLIRQSFNGSNLENINYEKLILTINTYKGLLVTKERPRFPEDDNRLYELNLNNITVNQVQEASSINHTEISDYFYKLFLLLDSSIGSEVWSPENQHQKQSSNAFSPFGFSFSNDNDSSKNKSLYVILFGTIIEAIPCCLSISRTIPYKSTIEILSRNAVHSEVIISSSSQNALRALASKKNPYTLITWFAKYSFDFDEKTQSSYNMSYLSSKEYNRLLILYVELLECWLEEFQSSNKEENKKETGLDGIRLLPIDAEQEESNETEKLEWKNTVTVIEEVEGNGLFFLCSHDAKIRRLGIQILRIIFKFDEAMMEKTEKLSNGHSRSSSHFAADRGTRLIDLLNECNTTTLINPHKATLSAVEKTRFSRLNSKYKRGLLIKLAESEYGVDAALWQRAFPKLLALVFKTCPMAMALCRSIVCIRLVQVHEIILRVANDVDFKLKNVLPETIVNQWKLYLIAACTSLTSTFDQKLHIPSNIPQHGRKKSQQIFTVQHQKIKSAKSIFKMVLPLLNAKYIMIRDAIITGLSSMNINIFKAYVEAIDVFLVAWKEGSSNNQIRVEMFHILTILSPYLKSDMIFNDEWILRKLSEFLQKTKQFLEKDSVQISYEYQSLRSYFAGLILSYYMAVREHPLIDELFPFQARASCFNFLKEWCGYGEYEPISEERYAIMIKNTESGRDRTAITTGIEFQKNRLQMIVLETMVVLCSDPITQTLDDDLELPIVISFDTEDLLAWIEALFDSDNTTVKNLGVRALENLLDKNRENFKLFRDVAFQCVSHHSHPSVAVLYYTTLCKSVLKLDNLVLDEDELVSLGLYGLVADKEDTRTFAVDLLSAVETKLHNSSYTKVFKERLANSSKTVYKSTAKEISSIFAELLSQDLCLRIFSSLVRILDLFPFEIKRDLLVLMVPWVNKFTLKSLEELDTFMVLNNLFYITIDLNDSLPNEVEQLWISLGKGNSFQNIHVSLEYIINSSMNHCNPLFVQYARDIVLYLANIPGGIGLLDTLLNNLEPKYMVPLAKHTFNEPMNNNKYSFLGNIWERLNYNGKRIIFSKAQLSIIFLVNLLTNLSESVKAKIPLLLHMSICLLDHYVPLIHESACKIASTLIFGLAPSHEKSEETVKLLRNKHALWSYDNLMKKGARSPKTMDLLIRNIISIFSDLDEFQVTWQRIALKWATTCSVRHIACRSFQIFRSLLTFLDQEMLRDMLHRLSNTISDGNVDIQGFAMQILMTLNAIMAELDPTNLISFPQLFWSITACLSSIHEQEFIEVLSCLSKFISKIDLDSPDTVQCLVAIFPSNWEGRFDGLQQIVMTGLRSANSLEITWKFLDKLNLLKDSRIIANTESRLLFALIANLPRFLNAMDRKDFTGIQVAADSLIELANAYKQPSLSRLIDSLAKNKFRSKKDFMSQVVSFISRNYFPSYSAQTLVFLLGLLFNKIGWIRVQTLEILKYVFPLIDLRRPEFIGVGADLISPLLRLLFTEYEAKALEVLDCVPNVSGSKMDKDVLRITMGNKDVKDGDNATTTLFGLPEDSGWSVPMPTMTAATTRHNVHAVFMTCGTGKSDEVSAHGSDDMDAVIEFHADGDYELGRMDTIVEFHADGDYDLGRMDTNDSISVAEEKDASLSHMWAELDNLDSFFTKDTNVPNISSKMGMGIPHGRSDSIETTRTDQTFSFESAPQLYDKKVSVILNRSLSRTPSNVSFKTHLADSFAVKINRNGKPRI.

Residues 1-30 (MASRFTFPPQRDQGIGFTFPPTNKAEGSSN) form a disordered region. Phosphoserine is present on Ser-141. Positions 275-294 (SSSNTTSKYKHNNNTNNLPG) are disordered. Residue Ser-1144 is modified to Phosphoserine. Thr-2264 is modified (phosphothreonine). 2 positions are modified to phosphoserine: Ser-2267 and Ser-2355.

To S.pombe mor2. As to quaternary structure, associates with CBK1.

Its function is as follows. Seems to play a role in cell morphogenesis. This chain is Cell morphogenesis protein PAG1 (TAO3), found in Saccharomyces cerevisiae (strain ATCC 204508 / S288c) (Baker's yeast).